The chain runs to 404 residues: Cysteine desulfurase IscS (404 aa).

Pyridoxal 5'-phosphate-binding positions include Ala-75–Thr-76, Asn-155, Gln-183, and Ser-203–His-205. Lys-206 carries the N6-(pyridoxal phosphate)lysine modification. Thr-243 contributes to the pyridoxal 5'-phosphate binding site. Cys-328 serves as the catalytic Cysteine persulfide intermediate. Cys-328 is a binding site for [2Fe-2S] cluster.

It belongs to the class-V pyridoxal-phosphate-dependent aminotransferase family. NifS/IscS subfamily. As to quaternary structure, homodimer. Forms a heterotetramer with IscU, interacts with other sulfur acceptors. Pyridoxal 5'-phosphate is required as a cofactor.

Its subcellular location is the cytoplasm. It carries out the reaction (sulfur carrier)-H + L-cysteine = (sulfur carrier)-SH + L-alanine. It participates in cofactor biosynthesis; iron-sulfur cluster biosynthesis. Master enzyme that delivers sulfur to a number of partners involved in Fe-S cluster assembly, tRNA modification or cofactor biosynthesis. Catalyzes the removal of elemental sulfur atoms from cysteine to produce alanine. Functions as a sulfur delivery protein for Fe-S cluster synthesis onto IscU, an Fe-S scaffold assembly protein, as well as other S acceptor proteins. This chain is Cysteine desulfurase IscS, found in Ectopseudomonas mendocina (strain ymp) (Pseudomonas mendocina).